The sequence spans 487 residues: Aromatic-L-amino-acid decarboxylase (487 aa).

M1 carries the post-translational modification N-acetylmethionine. 2 consecutive repeat copies span residues 58–115 (EDIE…TELE) and 118–178 (MMDW…MQAA). Positions 58-178 (EDIEKIIMPG…AASPELMQAA (121 aa)) are 2 X approximate tandem repeats. A substrate-binding site is contributed by T82. The pyridoxal 5'-phosphate site is built by A148 and S149. H192 is a substrate binding site. Pyridoxal 5'-phosphate is bound by residues T246 and N300. At K303 the chain carries N6-(pyridoxal phosphate)lysine.

It belongs to the group II decarboxylase family. In terms of assembly, homodimer. Pyridoxal 5'-phosphate serves as cofactor.

The enzyme catalyses L-dopa + H(+) = dopamine + CO2. It catalyses the reaction 5-hydroxy-L-tryptophan + H(+) = serotonin + CO2. It participates in catecholamine biosynthesis; dopamine biosynthesis; dopamine from L-tyrosine: step 2/2. Its function is as follows. Catalyzes the decarboxylation of L-3,4-dihydroxyphenylalanine (DOPA) to dopamine and L-5-hydroxytryptophan to serotonin. The protein is Aromatic-L-amino-acid decarboxylase (DDC) of Bos taurus (Bovine).